The primary structure comprises 248 residues: TPR repeat-containing protein slr0751 (248 aa).

4 TPR repeats span residues 61–94 (PEAI…SPDS), 95–128 (PETH…DRYY), 129–162 (IPPY…DPNR), and 163–196 (YKAY…RPDY).

The polypeptide is TPR repeat-containing protein slr0751 (Synechocystis sp. (strain ATCC 27184 / PCC 6803 / Kazusa)).